The following is a 168-amino-acid chain: G/U mismatch-specific DNA glycosylase (168 aa).

Belongs to the uracil-DNA glycosylase (UDG) superfamily. TDG/mug family. As to quaternary structure, binds DNA as a monomer.

It is found in the cytoplasm. The catalysed reaction is Specifically hydrolyzes mismatched double-stranded DNA and polynucleotides, releasing free uracil.. Excises ethenocytosine and uracil, which can arise by alkylation or deamination of cytosine, respectively, from the corresponding mispairs with guanine in ds-DNA. It is capable of hydrolyzing the carbon-nitrogen bond between the sugar-phosphate backbone of the DNA and the mispaired base. The complementary strand guanine functions in substrate recognition. Required for DNA damage lesion repair in stationary-phase cells. The protein is G/U mismatch-specific DNA glycosylase of Cronobacter sakazakii (strain ATCC BAA-894) (Enterobacter sakazakii).